The chain runs to 78 residues: Gas vesicle protein G (78 aa).

The protein belongs to the gas vesicle GvpG family.

It localises to the gas vesicle. Might be a minor component of the gas vesicle involved in nucleating their formation. Gas vesicles are hollow, gas filled proteinaceous nanostructures found in some microorganisms. It is not clear what function gas vesicles perform in soil bacteria. This chain is Gas vesicle protein G, found in Streptomyces sp. (strain CB03234).